A 192-amino-acid chain; its full sequence is Phosphoheptose isomerase (192 aa).

In terms of domain architecture, SIS spans 37–192 (LADSFKAGGK…IQLIEKEMVK (156 aa)). Residue 52-54 (NGG) participates in substrate binding. Zn(2+) contacts are provided by histidine 61 and glutamate 65. Residues glutamate 65, 93–94 (ND), 119–121 (STS), serine 124, and glutamine 172 each bind substrate. Zn(2+)-binding residues include glutamine 172 and histidine 180.

The protein belongs to the SIS family. GmhA subfamily. In terms of assembly, homotetramer. Zn(2+) is required as a cofactor.

The protein localises to the cytoplasm. The enzyme catalyses 2 D-sedoheptulose 7-phosphate = D-glycero-alpha-D-manno-heptose 7-phosphate + D-glycero-beta-D-manno-heptose 7-phosphate. It functions in the pathway carbohydrate biosynthesis; D-glycero-D-manno-heptose 7-phosphate biosynthesis; D-glycero-alpha-D-manno-heptose 7-phosphate and D-glycero-beta-D-manno-heptose 7-phosphate from sedoheptulose 7-phosphate: step 1/1. In terms of biological role, catalyzes the isomerization of sedoheptulose 7-phosphate in D-glycero-D-manno-heptose 7-phosphate. This is Phosphoheptose isomerase from Salmonella agona (strain SL483).